Consider the following 195-residue polypeptide: Thymidine kinase (195 aa).

ATP is bound by residues 15 to 22 (GSMFSGKS) and 88 to 91 (DEVQ). Glu-89 (proton acceptor) is an active-site residue. Zn(2+) is bound by residues Cys-145, Cys-148, Cys-183, and Cys-186.

It belongs to the thymidine kinase family. In terms of assembly, homotetramer.

It localises to the cytoplasm. The enzyme catalyses thymidine + ATP = dTMP + ADP + H(+). This is Thymidine kinase from Bacillus cereus (strain AH187).